The following is a 348-amino-acid chain: Ion-translocating oxidoreductase complex subunit D (348 aa).

The Cytoplasmic portion of the chain corresponds to 1 to 22 (MAFFIASSPHLRSKRSTADVMR). 2 helical membrane passes run 23–43 (WVLV…GYGT) and 44–64 (LIQL…IMLL). Over 65–71 (RKRSPIS) the chain is Cytoplasmic. A helical membrane pass occupies residues 72-91 (ALRDYSAVVTAWLLAVAIPP). Over 92 to 94 (LSP) the chain is Periplasmic. A helical membrane pass occupies residues 95-117 (WWVVVIGLIFAIVIAKHLYGGLG). Over 118-125 (QNPFNPAM) the chain is Cytoplasmic. Residues 126–146 (IAYVVLLISFPVQMTSWMAPI) traverse the membrane as a helical segment. Topologically, residues 147 to 213 (KLTAEPSSLV…ETLTQPQFSG (67 aa)) are periplasmic. Residue T187 is modified to FMN phosphoryl threonine. Residues 214-234 (FAGIGWEWVNIAYLLGGLILL) traverse the membrane as a helical segment. The Cytoplasmic segment spans residues 235-242 (KLRIIRWH). The helical transmembrane segment at 243 to 263 (IPVAMLAGLVFTALLAQLFAP) threads the bilayer. Topologically, residues 264 to 265 (GT) are periplasmic. The helical transmembrane segment at 266–286 (TASPMIHLLSGATMLGAFFIA) threads the bilayer. The Cytoplasmic segment spans residues 287–299 (TDPVSASTTDKGR). Transmembrane regions (helical) follow at residues 300-320 (LIYG…GGFP) and 321-341 (DGVA…DYYT). The Cytoplasmic segment spans residues 342–348 (KPRTYGH).

It belongs to the NqrB/RnfD family. In terms of assembly, the complex is composed of six subunits: RnfA, RnfB, RnfC, RnfD, RnfE and RnfG. The cofactor is FMN.

The protein localises to the cell inner membrane. In terms of biological role, part of a membrane-bound complex that couples electron transfer with translocation of ions across the membrane. In Vibrio cholerae serotype O1 (strain ATCC 39541 / Classical Ogawa 395 / O395), this protein is Ion-translocating oxidoreductase complex subunit D.